A 92-amino-acid polypeptide reads, in one-letter code: Small ribosomal subunit protein uS19 (92 aa).

Belongs to the universal ribosomal protein uS19 family.

Protein S19 forms a complex with S13 that binds strongly to the 16S ribosomal RNA. In Sodalis glossinidius (strain morsitans), this protein is Small ribosomal subunit protein uS19.